The chain runs to 349 residues: N-formyl peptide receptor 3 (349 aa).

The Extracellular portion of the chain corresponds to 1 to 27 (METNFSIPLNETEEVLPEPAGHTVLWI). N-linked (GlcNAc...) asparagine glycosylation is found at asparagine 4 and asparagine 10. The chain crosses the membrane as a helical span at residues 28-50 (FSLLVHGVTFVFGVLGNGLVIWV). The Cytoplasmic portion of the chain corresponds to 51–61 (AGFRMTRTVNT). Residues 62 to 83 (ICYLNLALADFSFSAILPFRMV) form a helical membrane-spanning segment. The Extracellular portion of the chain corresponds to 84-100 (SVAMREKWPFGSFLCKL). Cysteine 98 and cysteine 176 are joined by a disulfide. A helical membrane pass occupies residues 101–121 (VHVMIDINLFVSVYLITIIAL). Residues 122-140 (DRCICVLHPAWAQNHRTMS) lie on the Cytoplasmic side of the membrane. A helical membrane pass occupies residues 141–162 (LAKRVMTGLWILTIVLTLPNFI). Residues 163–205 (FWTTIRTTNGDTYCIFNFAFWGDTAVERLNVFITMAKVFLILH) lie on the Extracellular side of the membrane. The helical transmembrane segment at 206-226 (FIIGFSMPMSIITVCYGIIAA) threads the bilayer. Residues 227–242 (KIHRNHMIKSSRPLRV) lie on the Cytoplasmic side of the membrane. Residues 243–266 (FAAVVASFFICWFPYELIGILMAV) form a helical membrane-spanning segment. The Extracellular portion of the chain corresponds to 267–286 (WLKEMLLNGKYKIILVLINP). A helical transmembrane segment spans residues 287–306 (TSSLAFFNSCLNPILYVFMG). The Cytoplasmic segment spans residues 307–349 (RNFQERLIRSLPTSLERALTEVPDSAQTSNTHTTSASPPEETE). The segment at 327-349 (EVPDSAQTSNTHTTSASPPEETE) is disordered. The segment covering 331-343 (SAQTSNTHTTSAS) has biased composition (polar residues).

Belongs to the G-protein coupled receptor 1 family.

It localises to the cell membrane. Functionally, low affinity receptor for N-formyl-methionyl peptides, which are powerful neutrophils chemotactic factors. Binding of FMLP to the receptor causes activation of neutrophils. This response is mediated via a G-protein that activates a phosphatidylinositol-calcium second messenger system. The polypeptide is N-formyl peptide receptor 3 (FPR3) (Pan troglodytes (Chimpanzee)).